The sequence spans 343 residues: D-beta-hydroxybutyrate dehydrogenase, mitochondrial (343 aa).

The N-terminal 46 residues, 1-46 (MLAARLSRPLSQLPGKALSVCDRENGTRHTLLFYPASFSPDTRRTY), are a transit peptide targeting the mitochondrion. 59–83 (LVTGCDSGFGFSLAKHLHSKGFLVF) provides a ligand contact to NAD(+). Lysine 73 carries the N6-acetyllysine modification. Lysine 103 is modified (N6-acetyllysine; alternate). Lysine 103 carries the N6-succinyllysine; alternate modification. N6-acetyllysine occurs at positions 132 and 177. Serine 195 serves as a coordination point for substrate. The active-site Proton acceptor is the tyrosine 208. Position 212 is an N6-acetyllysine (lysine 212). O-linked (GlcNAc) serine glycosylation is present at serine 219. The residue at position 246 (serine 246) is a Phosphoserine. Lysine 258 carries the post-translational modification N6-acetyllysine. An N6-acetyllysine; alternate modification is found at lysine 259. Lysine 259 carries the N6-succinyllysine; alternate modification. An N6-acetyllysine modification is found at lysine 280.

The protein belongs to the short-chain dehydrogenases/reductases (SDR) family. In terms of assembly, homotetramer. As to expression, expressed in liver.

Its subcellular location is the mitochondrion inner membrane. It is found in the mitochondrion matrix. It carries out the reaction (R)-3-hydroxybutanoate + NAD(+) = acetoacetate + NADH + H(+). Requires phosphatidylcholine as an allosteric activator for enzymatic activity. In Rattus norvegicus (Rat), this protein is D-beta-hydroxybutyrate dehydrogenase, mitochondrial.